The sequence spans 620 residues: Glutathione-regulated potassium-efflux system protein KefC (620 aa).

Helical transmembrane passes span 4–24 (HTLIQALIYLGSAALIVPIAV), 26–46 (LGLGSVLGYLIAGCIIGPWGL), 54–74 (SILHFAEIGVVLMLFIIGLEL), 90–110 (GALQMVICGGLLGLFCMLLGL), 114–134 (VAELIGMTLALSSTAIAMQAM), 149–169 (FAVLLFQDIAAIPLVAMIPLL), 178–198 (MGAFVLSALKVAGALVLVVLL), 218–238 (VFSAVALFLVFGFGLLLEEVG), 270–290 (GLLLGLFFIGVGMSIDFGTLL), 294–314 (LRIVILLLGFLIIKIAMLWLI), 327–347 (WFAVLLGQGSEFAFVVFGAAQ), and 359–379 (SLTLAVALSMAATPILLVILN). Residues 399–518 (QPRVIIAGFG…AGVEKPERET (120 aa)) enclose the RCK N-terminal domain. The disordered stretch occupies residues 597 to 620 (GWQGTEEGKHTGNMADEPETKPSS).

Belongs to the monovalent cation:proton antiporter 2 (CPA2) transporter (TC 2.A.37) family. KefC subfamily. Homodimer. Interacts with the regulatory subunit KefF.

The protein resides in the cell inner membrane. In terms of biological role, pore-forming subunit of a potassium efflux system that confers protection against electrophiles. Catalyzes K(+)/H(+) antiport. This chain is Glutathione-regulated potassium-efflux system protein KefC, found in Escherichia coli O127:H6 (strain E2348/69 / EPEC).